We begin with the raw amino-acid sequence, 313 residues long: ADP-L-glycero-D-manno-heptose-6-epimerase (313 aa).

NADP(+) contacts are provided by residues 10 to 11 (MI), 31 to 32 (DN), lysine 38, arginine 53, 75 to 79 (EGACS), and asparagine 92. Catalysis depends on tyrosine 139, which acts as the Proton acceptor. Lysine 143 contributes to the NADP(+) binding site. Position 174 (asparagine 174) interacts with substrate. NADP(+) contacts are provided by valine 175 and lysine 183. Lysine 183 serves as the catalytic Proton acceptor. Residues serine 185, histidine 192, 206–209 (FEGS), arginine 214, and tyrosine 277 each bind substrate.

This sequence belongs to the NAD(P)-dependent epimerase/dehydratase family. HldD subfamily. In terms of assembly, homopentamer. Requires NADP(+) as cofactor.

It catalyses the reaction ADP-D-glycero-beta-D-manno-heptose = ADP-L-glycero-beta-D-manno-heptose. It functions in the pathway nucleotide-sugar biosynthesis; ADP-L-glycero-beta-D-manno-heptose biosynthesis; ADP-L-glycero-beta-D-manno-heptose from D-glycero-beta-D-manno-heptose 7-phosphate: step 4/4. It participates in bacterial outer membrane biogenesis; LPS core biosynthesis. Its function is as follows. Catalyzes the interconversion between ADP-D-glycero-beta-D-manno-heptose and ADP-L-glycero-beta-D-manno-heptose via an epimerization at carbon 6 of the heptose. This chain is ADP-L-glycero-D-manno-heptose-6-epimerase, found in Vibrio parahaemolyticus serotype O3:K6 (strain RIMD 2210633).